Reading from the N-terminus, the 234-residue chain is Putative B3 domain-containing protein At2g18810 (234 aa).

Residues 55 to 88 form a disordered region; the sequence is CKNQDPEQNPNRVASSPSLCHVKSKRPQKGVSNK. Positions 60–72 are enriched in polar residues; that stretch reads PEQNPNRVASSPS. A DNA-binding region (TF-B3) is located at residues 87 to 185; sequence NKPILDMDFL…MLFFALVLSD (99 aa).

It localises to the nucleus. In Arabidopsis thaliana (Mouse-ear cress), this protein is Putative B3 domain-containing protein At2g18810.